Reading from the N-terminus, the 507-residue chain is Aldehyde dehydrogenase 1, mitochondrial (507 aa).

The transit peptide at methionine 1–leucine 21 directs the protein to the mitochondrion. Glycine 266–glycine 271 is a binding site for NAD(+). Catalysis depends on residues glutamate 289 and cysteine 323.

Belongs to the aldehyde dehydrogenase family. Homotetramer.

The protein resides in the mitochondrion matrix. The catalysed reaction is an aldehyde + NAD(+) + H2O = a carboxylate + NADH + 2 H(+). It functions in the pathway alcohol metabolism; ethanol degradation; acetate from ethanol: step 2/2. The sequence is that of Aldehyde dehydrogenase 1, mitochondrial (ALD1) from Saccharomyces cerevisiae (Baker's yeast).